The following is a 160-amino-acid chain: SsrA-binding protein (160 aa).

Residues 138–148 show a composition bias toward basic and acidic residues; the sequence is KRDDIKDREWQ. The disordered stretch occupies residues 138–160; sequence KRDDIKDREWQTAKSRIMKHANR.

This sequence belongs to the SmpB family.

The protein resides in the cytoplasm. Required for rescue of stalled ribosomes mediated by trans-translation. Binds to transfer-messenger RNA (tmRNA), required for stable association of tmRNA with ribosomes. tmRNA and SmpB together mimic tRNA shape, replacing the anticodon stem-loop with SmpB. tmRNA is encoded by the ssrA gene; the 2 termini fold to resemble tRNA(Ala) and it encodes a 'tag peptide', a short internal open reading frame. During trans-translation Ala-aminoacylated tmRNA acts like a tRNA, entering the A-site of stalled ribosomes, displacing the stalled mRNA. The ribosome then switches to translate the ORF on the tmRNA; the nascent peptide is terminated with the 'tag peptide' encoded by the tmRNA and targeted for degradation. The ribosome is freed to recommence translation, which seems to be the essential function of trans-translation. This chain is SsrA-binding protein, found in Serratia proteamaculans (strain 568).